The sequence spans 97 residues: Putative pterin-4-alpha-carbinolamine dehydratase (97 aa).

It belongs to the pterin-4-alpha-carbinolamine dehydratase family.

The enzyme catalyses (4aS,6R)-4a-hydroxy-L-erythro-5,6,7,8-tetrahydrobiopterin = (6R)-L-erythro-6,7-dihydrobiopterin + H2O. The chain is Putative pterin-4-alpha-carbinolamine dehydratase from Brucella abortus (strain S19).